We begin with the raw amino-acid sequence, 329 residues long: Beta-ketoacyl-[acyl-carrier-protein] synthase III (329 aa).

Active-site residues include Cys-113 and His-256. The ACP-binding stretch occupies residues 257 to 261; the sequence is QANQR. Asn-286 is a catalytic residue.

Belongs to the thiolase-like superfamily. FabH family. As to quaternary structure, homodimer.

The protein resides in the cytoplasm. The catalysed reaction is malonyl-[ACP] + acetyl-CoA + H(+) = 3-oxobutanoyl-[ACP] + CO2 + CoA. The protein operates within lipid metabolism; fatty acid biosynthesis. Its function is as follows. Catalyzes the condensation reaction of fatty acid synthesis by the addition to an acyl acceptor of two carbons from malonyl-ACP. Catalyzes the first condensation reaction which initiates fatty acid synthesis and may therefore play a role in governing the total rate of fatty acid production. Possesses both acetoacetyl-ACP synthase and acetyl transacylase activities. Its substrate specificity determines the biosynthesis of branched-chain and/or straight-chain of fatty acids. This chain is Beta-ketoacyl-[acyl-carrier-protein] synthase III, found in Natranaerobius thermophilus (strain ATCC BAA-1301 / DSM 18059 / JW/NM-WN-LF).